We begin with the raw amino-acid sequence, 1386 residues long: DNA-directed RNA polymerase subunit beta (1386 aa).

This sequence belongs to the RNA polymerase beta chain family. In plastids the minimal PEP RNA polymerase catalytic core is composed of four subunits: alpha, beta, beta', and beta''. When a (nuclear-encoded) sigma factor is associated with the core the holoenzyme is formed, which can initiate transcription.

It is found in the plastid. It localises to the chloroplast. It catalyses the reaction RNA(n) + a ribonucleoside 5'-triphosphate = RNA(n+1) + diphosphate. In terms of biological role, DNA-dependent RNA polymerase catalyzes the transcription of DNA into RNA using the four ribonucleoside triphosphates as substrates. This is DNA-directed RNA polymerase subunit beta from Thalassiosira pseudonana (Marine diatom).